A 128-amino-acid chain; its full sequence is Holo-[acyl-carrier-protein] synthase (128 aa).

Residues Asp-8 and Glu-60 each coordinate Mg(2+).

This sequence belongs to the P-Pant transferase superfamily. AcpS family. It depends on Mg(2+) as a cofactor.

It is found in the cytoplasm. It catalyses the reaction apo-[ACP] + CoA = holo-[ACP] + adenosine 3',5'-bisphosphate + H(+). Functionally, transfers the 4'-phosphopantetheine moiety from coenzyme A to a Ser of acyl-carrier-protein. The chain is Holo-[acyl-carrier-protein] synthase from Anaeromyxobacter sp. (strain K).